Consider the following 397-residue polypeptide: CCA-adding enzyme (397 aa).

Positions 27 and 30 each coordinate ATP. Residues G27 and R30 each contribute to the CTP site. Residues D40 and D42 each coordinate Mg(2+). ATP-binding residues include R111, D154, R157, R160, and R163. CTP-binding residues include R111, D154, R157, R160, and R163.

It belongs to the tRNA nucleotidyltransferase/poly(A) polymerase family. Bacterial CCA-adding enzyme type 3 subfamily. Homodimer. The cofactor is Mg(2+).

The enzyme catalyses a tRNA precursor + 2 CTP + ATP = a tRNA with a 3' CCA end + 3 diphosphate. It carries out the reaction a tRNA with a 3' CCA end + 2 CTP + ATP = a tRNA with a 3' CCACCA end + 3 diphosphate. Catalyzes the addition and repair of the essential 3'-terminal CCA sequence in tRNAs without using a nucleic acid template. Adds these three nucleotides in the order of C, C, and A to the tRNA nucleotide-73, using CTP and ATP as substrates and producing inorganic pyrophosphate. Has no poly(A) polymerase activity. The sequence is that of CCA-adding enzyme from Bacillus subtilis (strain 168).